We begin with the raw amino-acid sequence, 122 residues long: uncharacterized protein (122 aa).

3 helical membrane passes run 33–53, 58–78, and 97–117; these read ALGL…LTIP, VLGV…LLRW, and PGYL…LVVA.

To E.coli YidH.

The protein resides in the cell membrane. This is an uncharacterized protein from Mycobacterium tuberculosis (strain CDC 1551 / Oshkosh).